A 166-amino-acid chain; its full sequence is Putative 4-hydroxy-4-methyl-2-oxoglutarate aldolase (166 aa).

Substrate-binding positions include 81 to 84 and Arg-103; that span reads GDII. Asp-104 contacts a divalent metal cation.

Belongs to the class II aldolase/RraA-like family. As to quaternary structure, homotrimer. It depends on a divalent metal cation as a cofactor.

The catalysed reaction is 4-hydroxy-4-methyl-2-oxoglutarate = 2 pyruvate. It catalyses the reaction oxaloacetate + H(+) = pyruvate + CO2. Its function is as follows. Catalyzes the aldol cleavage of 4-hydroxy-4-methyl-2-oxoglutarate (HMG) into 2 molecules of pyruvate. Also contains a secondary oxaloacetate (OAA) decarboxylase activity due to the common pyruvate enolate transition state formed following C-C bond cleavage in the retro-aldol and decarboxylation reactions. This chain is Putative 4-hydroxy-4-methyl-2-oxoglutarate aldolase, found in Corynebacterium glutamicum (strain ATCC 13032 / DSM 20300 / JCM 1318 / BCRC 11384 / CCUG 27702 / LMG 3730 / NBRC 12168 / NCIMB 10025 / NRRL B-2784 / 534).